The following is a 919-amino-acid chain: Isoleucine--tRNA ligase (919 aa).

The short motif at 57–67 (PYANGHIHIGT) is the 'HIGH' region element. Residue Glu-553 participates in L-isoleucyl-5'-AMP binding. The 'KMSKS' region signature appears at 594–598 (KMSKS). Lys-597 is a binding site for ATP. The Zn(2+) site is built by Cys-887, Cys-890, Cys-907, and Cys-910.

Belongs to the class-I aminoacyl-tRNA synthetase family. IleS type 1 subfamily. As to quaternary structure, monomer. Requires Zn(2+) as cofactor.

The protein localises to the cytoplasm. The enzyme catalyses tRNA(Ile) + L-isoleucine + ATP = L-isoleucyl-tRNA(Ile) + AMP + diphosphate. Its function is as follows. Catalyzes the attachment of isoleucine to tRNA(Ile). As IleRS can inadvertently accommodate and process structurally similar amino acids such as valine, to avoid such errors it has two additional distinct tRNA(Ile)-dependent editing activities. One activity is designated as 'pretransfer' editing and involves the hydrolysis of activated Val-AMP. The other activity is designated 'posttransfer' editing and involves deacylation of mischarged Val-tRNA(Ile). The protein is Isoleucine--tRNA ligase of Thermotoga maritima (strain ATCC 43589 / DSM 3109 / JCM 10099 / NBRC 100826 / MSB8).